The sequence spans 900 residues: Alanine--tRNA ligase (900 aa).

Residues His-567, His-571, Cys-671, and His-675 each contribute to the Zn(2+) site.

It belongs to the class-II aminoacyl-tRNA synthetase family. Zn(2+) serves as cofactor.

The protein resides in the cytoplasm. It carries out the reaction tRNA(Ala) + L-alanine + ATP = L-alanyl-tRNA(Ala) + AMP + diphosphate. In terms of biological role, catalyzes the attachment of alanine to tRNA(Ala) in a two-step reaction: alanine is first activated by ATP to form Ala-AMP and then transferred to the acceptor end of tRNA(Ala). Also edits incorrectly charged Ser-tRNA(Ala) and Gly-tRNA(Ala) via its editing domain. The polypeptide is Alanine--tRNA ligase (Mycoplasma pneumoniae (strain ATCC 29342 / M129 / Subtype 1) (Mycoplasmoides pneumoniae)).